The chain runs to 876 residues: Alanine--tRNA ligase (876 aa).

Residues His566, His570, Cys667, and His671 each coordinate Zn(2+).

Belongs to the class-II aminoacyl-tRNA synthetase family. Zn(2+) serves as cofactor.

It is found in the cytoplasm. The catalysed reaction is tRNA(Ala) + L-alanine + ATP = L-alanyl-tRNA(Ala) + AMP + diphosphate. Functionally, catalyzes the attachment of alanine to tRNA(Ala) in a two-step reaction: alanine is first activated by ATP to form Ala-AMP and then transferred to the acceptor end of tRNA(Ala). Also edits incorrectly charged Ser-tRNA(Ala) and Gly-tRNA(Ala) via its editing domain. The chain is Alanine--tRNA ligase from Albidiferax ferrireducens (strain ATCC BAA-621 / DSM 15236 / T118) (Rhodoferax ferrireducens).